The sequence spans 173 residues: MPRTQKNDNFVDKSFTVMADIILKILPTNKKAKEAFVYYRDGMSAQAEGEYAEALEYYEEALTLEEDTNDRGYILYNMGLIYASNGDHDKALELYHQAIELNPRLPQALNNIAVIYHYKGEKAKEDGDHDGGEALFDQAADYWIRAIRMAPNNYIEAQNWLKTTGRMQIDVFF.

3 TPR repeats span residues 35 to 68 (AFVY…EEDT), 72 to 105 (GYIL…NPRL), and 120 to 153 (GEKA…APNN).

This sequence belongs to the Ycf3 family.

The protein localises to the cellular thylakoid membrane. Functionally, essential for the assembly of the photosystem I (PSI) complex. May act as a chaperone-like factor to guide the assembly of the PSI subunits. The protein is Photosystem I assembly protein Ycf3 of Trichormus variabilis (strain ATCC 29413 / PCC 7937) (Anabaena variabilis).